Consider the following 102-residue polypeptide: Large ribosomal subunit protein bL21 (102 aa).

Belongs to the bacterial ribosomal protein bL21 family. As to quaternary structure, part of the 50S ribosomal subunit. Contacts protein L20.

Functionally, this protein binds to 23S rRNA in the presence of protein L20. The polypeptide is Large ribosomal subunit protein bL21 (Desulfovibrio desulfuricans (strain ATCC 27774 / DSM 6949 / MB)).